The sequence spans 237 residues: Mitochondrial inner membrane protease atp23 (237 aa).

His-136 contributes to the a divalent metal cation binding site. Residue Glu-137 is part of the active site. His-140 lines the a divalent metal cation pocket.

It belongs to the peptidase M76 family.

It is found in the mitochondrion inner membrane. In terms of biological role, has a dual role in the assembly of mitochondrial ATPase. Acts as a protease that removes N-terminal residues of mitochondrial ATPase CF(0) subunit 6 at the intermembrane space side. Also involved in the correct assembly of the membrane-embedded ATPase CF(0) particle, probably mediating association of subunit 6 with the subunit 9 ring. This Aspergillus clavatus (strain ATCC 1007 / CBS 513.65 / DSM 816 / NCTC 3887 / NRRL 1 / QM 1276 / 107) protein is Mitochondrial inner membrane protease atp23 (atp23).